The sequence spans 229 residues: Heptaprenylglyceryl phosphate synthase (229 aa).

Lysine 12 is a sn-glycerol 1-phosphate binding site. Mg(2+) is bound by residues aspartate 14 and threonine 40. Sn-glycerol 1-phosphate contacts are provided by residues 159-164, glycine 189, and 209-210; these read YIEYSG and GN.

Belongs to the GGGP/HepGP synthase family. Group I subfamily. In terms of assembly, homodimer. Mg(2+) is required as a cofactor.

The enzyme catalyses sn-glycerol 1-phosphate + all-trans-heptaprenyl diphosphate = 3-heptaprenyl-sn-glycero-1-phosphate + diphosphate. It functions in the pathway membrane lipid metabolism; glycerophospholipid metabolism. Prenyltransferase that catalyzes in vivo the transfer of the heptaprenyl moiety of heptaprenyl pyrophosphate (HepPP; 35 carbon atoms) to the C3 hydroxyl of sn-glycerol-1-phosphate (G1P), producing heptaprenylglyceryl phosphate (HepGP). This reaction is an ether-bond-formation step in the biosynthesis of archaea-type G1P-based membrane lipids found in Bacillales. This chain is Heptaprenylglyceryl phosphate synthase, found in Staphylococcus saprophyticus subsp. saprophyticus (strain ATCC 15305 / DSM 20229 / NCIMB 8711 / NCTC 7292 / S-41).